A 399-amino-acid polypeptide reads, in one-letter code: Semaphorin-like protein 139 (399 aa).

The first 14 residues, 1 to 14 (MIPLLFILFYFTNC), serve as a signal peptide directing secretion. In terms of domain architecture, Sema spans 15-399 (IEWHKFETSE…IPRMKKILKM (385 aa)).

It belongs to the semaphorin family. In terms of assembly, interacts with host VESPR.

The protein localises to the secreted. In terms of biological role, acts as a semaphorin-like protein and binds to host plexin C1 receptor. May alter the movement of plexin C1-expressing cells including dendritic cells, monocytes, or granulocytes in the proximity of infected cells. May also regulate host cell cytoskeleton of neighboring cells to improve viral infection. In Ectromelia virus (strain Moscow) (ECTV), this protein is Semaphorin-like protein 139 (EVM139).